The primary structure comprises 289 residues: Glycine--tRNA ligase alpha subunit (289 aa).

The protein belongs to the class-II aminoacyl-tRNA synthetase family. In terms of assembly, tetramer of two alpha and two beta subunits.

It localises to the cytoplasm. It catalyses the reaction tRNA(Gly) + glycine + ATP = glycyl-tRNA(Gly) + AMP + diphosphate. In Rickettsia bellii (strain OSU 85-389), this protein is Glycine--tRNA ligase alpha subunit.